The sequence spans 400 residues: NADH-quinone oxidoreductase subunit D (400 aa).

The protein belongs to the complex I 49 kDa subunit family. In terms of assembly, NDH-1 is composed of 14 different subunits. Subunits NuoB, C, D, E, F, and G constitute the peripheral sector of the complex.

The protein resides in the cell inner membrane. It catalyses the reaction a quinone + NADH + 5 H(+)(in) = a quinol + NAD(+) + 4 H(+)(out). Its function is as follows. NDH-1 shuttles electrons from NADH, via FMN and iron-sulfur (Fe-S) centers, to quinones in the respiratory chain. The immediate electron acceptor for the enzyme in this species is believed to be a menaquinone. Couples the redox reaction to proton translocation (for every two electrons transferred, four hydrogen ions are translocated across the cytoplasmic membrane), and thus conserves the redox energy in a proton gradient. This chain is NADH-quinone oxidoreductase subunit D, found in Chlorobaculum parvum (strain DSM 263 / NCIMB 8327) (Chlorobium vibrioforme subsp. thiosulfatophilum).